A 179-amino-acid chain; its full sequence is Small ribosomal subunit protein uS5 (179 aa).

Positions 22 to 85 constitute an S5 DRBM domain; that stretch reads MIEKLVAVNR…EYARKTMANV (64 aa).

The protein belongs to the universal ribosomal protein uS5 family. In terms of assembly, part of the 30S ribosomal subunit. Contacts proteins S4 and S8.

Its function is as follows. With S4 and S12 plays an important role in translational accuracy. In terms of biological role, located at the back of the 30S subunit body where it stabilizes the conformation of the head with respect to the body. This is Small ribosomal subunit protein uS5 from Xylella fastidiosa (strain 9a5c).